A 537-amino-acid polypeptide reads, in one-letter code: 5,6-dihydroxyindole-2-carboxylic acid oxidase (537 aa).

An N-terminal signal peptide occupies residues 1–24 (MKSYNVLPLAYISLFLMLFYQVWA). The Lumenal, melanosome portion of the chain corresponds to 25–477 (QFPRECANIE…WPGQEFTVSE (453 aa)). 5 disulfides stabilise this stretch: C30-C41, C42-C65, C56-C99, C101-C110, and C113-C122. 2 N-linked (GlcNAc...) asparagine glycosylation sites follow: N96 and N104. N181 carries N-linked (GlcNAc...) asparagine glycosylation. Positions 192, 215, and 224 each coordinate Zn(2+). Intrachain disulfides connect C258-C261 and C290-C303. N-linked (GlcNAc...) asparagine glycans are attached at residues N304 and N350. Residues H377 and H381 each coordinate Zn(2+). An N-linked (GlcNAc...) asparagine glycan is attached at N385. H404 contacts Zn(2+). The helical transmembrane segment at 478–501 (IITIAVVAALLLVAAIFGVASCLI) threads the bilayer. The Cytoplasmic portion of the chain corresponds to 502-537 (RSRSTKNEANQPLLTDHYQRYAEDYEELPNPNHSMV).

This sequence belongs to the tyrosinase family. In terms of assembly, monomer. Interacts with ATP7A. Interacts with SLC45A2. Cu(2+) is required as a cofactor. Requires Zn(2+) as cofactor. In terms of processing, glycosylated. As to expression, pigment cells.

The protein localises to the melanosome membrane. The enzyme catalyses 2 5,6-dihydroxyindole-2-carboxylate + O2 = 2 indole-5,6-quinone-2-carboxylate + 2 H2O. Its pathway is pigment biosynthesis; melanin biosynthesis. Functionally, plays a role in melanin biosynthesis. Catalyzes the oxidation of 5,6-dihydroxyindole-2-carboxylic acid (DHICA) into indole-5,6-quinone-2-carboxylic acid. May regulate or influence the type of melanin synthesized. Also to a lower extent, capable of hydroxylating tyrosine and producing melanin. In Mus musculus (Mouse), this protein is 5,6-dihydroxyindole-2-carboxylic acid oxidase (Tyrp1).